An 880-amino-acid chain; its full sequence is Translation initiation factor IF-2 (880 aa).

Basic and acidic residues-rich tracts occupy residues 180 to 194 (QEAA…EAAK) and 202 to 228 (LAEE…DHHI). The interval 180-289 (QEAATKRKQD…APESMAHGFN (110 aa)) is disordered. Positions 249–262 (GRRARNKSNAKKRG) are enriched in basic residues. The tr-type G domain maps to 380 to 549 (SRAPVVTIMG…LLQAEVLELK (170 aa)). Positions 389-396 (GHVDHGKT) are G1. 389–396 (GHVDHGKT) contacts GTP. Residues 414–418 (GITQH) form a G2 region. The tract at residues 435 to 438 (DTPG) is G3. Residues 435–439 (DTPGH) and 489–492 (NKMD) contribute to the GTP site. The interval 489–492 (NKMD) is G4. The interval 525–527 (SAK) is G5.

Belongs to the TRAFAC class translation factor GTPase superfamily. Classic translation factor GTPase family. IF-2 subfamily.

It localises to the cytoplasm. Functionally, one of the essential components for the initiation of protein synthesis. Protects formylmethionyl-tRNA from spontaneous hydrolysis and promotes its binding to the 30S ribosomal subunits. Also involved in the hydrolysis of GTP during the formation of the 70S ribosomal complex. In Shewanella baltica (strain OS223), this protein is Translation initiation factor IF-2.